The following is a 202-amino-acid chain: ATP-dependent Clp protease proteolytic subunit (202 aa).

Ser-101 serves as the catalytic Nucleophile. Residue His-126 is part of the active site.

It belongs to the peptidase S14 family. As to quaternary structure, component of the chloroplastic Clp protease core complex.

The protein localises to the plastid. The protein resides in the chloroplast stroma. The enzyme catalyses Hydrolysis of proteins to small peptides in the presence of ATP and magnesium. alpha-casein is the usual test substrate. In the absence of ATP, only oligopeptides shorter than five residues are hydrolyzed (such as succinyl-Leu-Tyr-|-NHMec, and Leu-Tyr-Leu-|-Tyr-Trp, in which cleavage of the -Tyr-|-Leu- and -Tyr-|-Trp bonds also occurs).. In terms of biological role, cleaves peptides in various proteins in a process that requires ATP hydrolysis. Has a chymotrypsin-like activity. Plays a major role in the degradation of misfolded proteins. The protein is ATP-dependent Clp protease proteolytic subunit of Buxus microphylla (Littleleaf boxwood).